Consider the following 636-residue polypeptide: Threonine--tRNA ligase (636 aa).

In terms of domain architecture, TGS spans 1–63; it reads MSSISIALPD…KDDSRVEIIT (63 aa). Positions 243–534 are catalytic; sequence DHRRLGRELD…LIEHYAGNFP (292 aa). Positions 335, 386, and 511 each coordinate Zn(2+).

This sequence belongs to the class-II aminoacyl-tRNA synthetase family. In terms of assembly, homodimer. The cofactor is Zn(2+).

The protein resides in the cytoplasm. The enzyme catalyses tRNA(Thr) + L-threonine + ATP = L-threonyl-tRNA(Thr) + AMP + diphosphate + H(+). In terms of biological role, catalyzes the attachment of threonine to tRNA(Thr) in a two-step reaction: L-threonine is first activated by ATP to form Thr-AMP and then transferred to the acceptor end of tRNA(Thr). Also edits incorrectly charged L-seryl-tRNA(Thr). This is Threonine--tRNA ligase from Pelobacter propionicus (strain DSM 2379 / NBRC 103807 / OttBd1).